A 518-amino-acid polypeptide reads, in one-letter code: Maturase K (518 aa).

The protein belongs to the intron maturase 2 family. MatK subfamily.

The protein localises to the plastid. It localises to the chloroplast. In terms of biological role, usually encoded in the trnK tRNA gene intron. Probably assists in splicing its own and other chloroplast group II introns. In Syzygium cumini (Java plum), this protein is Maturase K.